Consider the following 220-residue polypeptide: Ribose-5-phosphate isomerase A (220 aa).

Residues 28–31, 81–84, and 94–97 contribute to the substrate site; these read TGST, DGAD, and KGGG. Catalysis depends on glutamate 103, which acts as the Proton acceptor. Lysine 121 serves as a coordination point for substrate.

It belongs to the ribose 5-phosphate isomerase family. As to quaternary structure, homodimer.

It catalyses the reaction aldehydo-D-ribose 5-phosphate = D-ribulose 5-phosphate. It participates in carbohydrate degradation; pentose phosphate pathway; D-ribose 5-phosphate from D-ribulose 5-phosphate (non-oxidative stage): step 1/1. Its function is as follows. Catalyzes the reversible conversion of ribose-5-phosphate to ribulose 5-phosphate. The sequence is that of Ribose-5-phosphate isomerase A from Shewanella baltica (strain OS223).